The sequence spans 371 residues: Peptide chain release factor 2 (371 aa).

Q253 is subject to N5-methylglutamine.

This sequence belongs to the prokaryotic/mitochondrial release factor family. In terms of processing, methylated by PrmC. Methylation increases the termination efficiency of RF2.

Its subcellular location is the cytoplasm. Peptide chain release factor 2 directs the termination of translation in response to the peptide chain termination codons UGA and UAA. This is Peptide chain release factor 2 from Mycobacterium marinum (strain ATCC BAA-535 / M).